A 365-amino-acid polypeptide reads, in one-letter code: IgG receptor FcRn large subunit p51 (365 aa).

Positions 1–21 (MGMPLPWALSLLLVLLPQTWG) are cleaved as a signal peptide. The alpha-1 stretch occupies residues 22–110 (SETRPPLMYH…KTLEKILNGT (89 aa)). Over 22-297 (SETRPPLMYH…VDLDSSARSS (276 aa)) the chain is Extracellular. Residues Asn-108, Asn-125, Asn-149, and Asn-246 are each glycosylated (N-linked (GlcNAc...) asparagine). The alpha-2 stretch occupies residues 111-200 (YTLQGLLGCE…ERGRRNLEWK (90 aa)). Cystine bridges form between Cys-119–Cys-182 and Cys-221–Cys-275. The interval 201–290 (EPPSMRLKAR…GLAQPLTVDL (90 aa)) is alpha-3. The Ig-like C1-type domain occupies 202 to 289 (PPSMRLKARP…EGLAQPLTVD (88 aa)). A connecting peptide region spans residues 291–297 (DSSARSS). A helical membrane pass occupies residues 298–321 (VPVVGIVLGLLLVVVAIAGGVLLW). Residues 322–365 (GRMRSGLPAPWLSLSGDDSGDLLPGGNLPPEAEPQGANAFPATS) lie on the Cytoplasmic side of the membrane. Ser-334 carries the post-translational modification Phosphoserine. Positions 343–365 (LLPGGNLPPEAEPQGANAFPATS) are disordered.

Belongs to the immunoglobulin superfamily. As to quaternary structure, fcRn complex consists of two subunits: p51, and p14 which is equivalent to beta-2-microglobulin. It forms an MHC class I-like heterodimer. Interacts with albumin/ALB; this interaction regulates ALB homeostasis. In terms of tissue distribution, intestinal epithelium of suckling rodents. Expressed in neonatal intestine and fetal yolk sac.

The protein resides in the cell membrane. The protein localises to the endosome membrane. Functionally, cell surface receptor that transfers passive humoral immunity from the mother to the newborn. Binds to the Fc region of monomeric immunoglobulin gamma and mediates its selective uptake from milk. IgG in the milk is bound at the apical surface of the intestinal epithelium. The resultant FcRn-IgG complexes are transcytosed across the intestinal epithelium and IgG is released from FcRn into blood or tissue fluids. Throughout life, contributes to effective humoral immunity by recycling IgG and extending its half-life in the circulation. Mechanistically, monomeric IgG binding to FcRn in acidic endosomes of endothelial and hematopoietic cells recycles IgG to the cell surface where it is released into the circulation. In addition of IgG, regulates homeostasis of the other most abundant circulating protein albumin/ALB. This Mus musculus (Mouse) protein is IgG receptor FcRn large subunit p51 (Fcgrt).